We begin with the raw amino-acid sequence, 257 residues long: Large ribosomal subunit protein uL3 (257 aa).

The tract at residues 232 to 257 (LKAPKKQKTKVETNQVNPKIEEEKTK) is disordered.

Belongs to the universal ribosomal protein uL3 family. In terms of assembly, part of the 50S ribosomal subunit. Forms a cluster with proteins L14 and L19.

Its function is as follows. One of the primary rRNA binding proteins, it binds directly near the 3'-end of the 23S rRNA, where it nucleates assembly of the 50S subunit. The polypeptide is Large ribosomal subunit protein uL3 (Mycoplasma genitalium (strain ATCC 33530 / DSM 19775 / NCTC 10195 / G37) (Mycoplasmoides genitalium)).